The sequence spans 132 residues: Small ribosomal subunit protein uS8 (132 aa).

This sequence belongs to the universal ribosomal protein uS8 family. As to quaternary structure, part of the 30S ribosomal subunit. Contacts proteins S5 and S12.

In terms of biological role, one of the primary rRNA binding proteins, it binds directly to 16S rRNA central domain where it helps coordinate assembly of the platform of the 30S subunit. The protein is Small ribosomal subunit protein uS8 of Xanthomonas axonopodis pv. citri (strain 306).